Consider the following 131-residue polypeptide: Small ribosomal subunit protein uS8 (131 aa).

The protein belongs to the universal ribosomal protein uS8 family. Part of the 30S ribosomal subunit. Contacts proteins S5 and S12.

Its function is as follows. One of the primary rRNA binding proteins, it binds directly to 16S rRNA central domain where it helps coordinate assembly of the platform of the 30S subunit. This Chromobacterium violaceum (strain ATCC 12472 / DSM 30191 / JCM 1249 / CCUG 213 / NBRC 12614 / NCIMB 9131 / NCTC 9757 / MK) protein is Small ribosomal subunit protein uS8.